A 187-amino-acid polypeptide reads, in one-letter code: Cytokinin riboside 5'-monophosphate phosphoribohydrolase (187 aa).

Residue K74 forms an Isoglutamyl lysine isopeptide (Lys-Gln) (interchain with Q-Cter in protein Pup) linkage. Substrate contacts are provided by residues E80, 98-99, 115-121, and T127; these read RK and GVGTLDE.

This sequence belongs to the LOG family. Homodimer. Post-translationally, pupylated at Lys-74 by the prokaryotic ubiquitin-like protein Pup, which leads to its degradation by the proteasome. The proteasomal control of cytokinin synthesis is essential to protect M.tuberculosis against host-produced NO.

It carries out the reaction N(6)-(dimethylallyl)adenosine 5'-phosphate + H2O = N(6)-dimethylallyladenine + D-ribose 5-phosphate. The catalysed reaction is 9-ribosyl-trans-zeatin 5'-phosphate + H2O = trans-zeatin + D-ribose 5-phosphate. Functionally, catalyzes the hydrolytic removal of ribose 5'-monophosphate from nitrogen N6-modified adenosines, the final step of bioactive cytokinin synthesis. Is involved in the synthesis of isopentenyladenine (iP) and 2-methylthio-iP (2MeS-iP), the most abundant cytokinins detected in M.tuberculosis lysates and supernatants. Is also able to convert trans-zeatin-riboside monophosphate (tZRMP) to trans-zeatin (tZ) in vitro; however, it may not be involved in the biosynthesis of this minor cytokinin in vivo. Accumulation of Rv1205 sensitizes M.tuberculosis to nitric oxide since cytokinin breakdown products synergize with NO to kill M.tuberculosis. Shows a slow AMP hydrolase activity, but is not able to hydrolyze ATP. Displays no lysine decarboxylase (LDC) activity (L-lysine conversion to cadaverine). The sequence is that of Cytokinin riboside 5'-monophosphate phosphoribohydrolase from Mycobacterium tuberculosis (strain ATCC 25618 / H37Rv).